Consider the following 848-residue polypeptide: MNLESTATSAEYWSDLADALNTPMMKQFLAIKKDFPDTILFFRMGDFYEMFLEDAKIASSILDIALTKRQNAVPMCGIPYHSKDNYISRLLNAGKKIAICEQSKPEEAGSKLMTRDVVRIITPGTVIEENLLSGFQNNYLAVLHLKKSLIYFAIADFSTGEVFYSSVSVTGLERLIAELEKFKPSEICVPKSEHTFFQELEYFKNREFTVLKNQIETSEKDSFQVLSKYLNEYIRETYRDNKLVLREPKILSSGKFLEMDRETIRNLELVENEKEKNNTLYSIFNFCNTAKGKRLLKQRILFPECDPVVLYSRWEKQDILLKTVLAPYITALKDFGDLERILTRFRGNHAYPRDFRSLLNSISSGIKLKEELEKVSYPFLIPIEELKKISDFIQERLHPGDDLPVILGNGIFLKKGFSQKLDQAREAGVKGKDWILDLETKEKKRTGLNTLKIRYNKIVGYFIEISRAQAEQAPKDYLKKQTLVGSERFTMPKLEEIERTILEADEIIQEIERTEFNRMVEEVLKFSSSLLSFSEEIGDLDFQISLLTAKDKFGWIRPKLSEDRSLDLSDSRHPVVEATLPPGQEFIPNSVYLDTQDKAIAVLTGPNMAGKSTFMRQIALNQILFQIGAFVPAKSAKLPIVDKLFTRIGAGDNLTAGESTFFVEMKETANILNHYTEDSLILFDEVGRGTSTYDGMSIAWSILEYLSSLSVRPKTIFATHYHELTELSRLGGIFNLYLETLEKEDRVLFLRKVKVGKAKKSFGIYVAKIAGVPEPIVKRAAELLTDLESKKKEIKIQEAQPTLFTEPETKNFNSQTEESILKLKLEEMTPIEALKTLEDFQKKLRKQK.

Residue glycine 605 to serine 612 participates in ATP binding.

This sequence belongs to the DNA mismatch repair MutS family.

In terms of biological role, this protein is involved in the repair of mismatches in DNA. It is possible that it carries out the mismatch recognition step. This protein has a weak ATPase activity. This is DNA mismatch repair protein MutS from Leptospira interrogans serogroup Icterohaemorrhagiae serovar Lai (strain 56601).